The following is a 494-amino-acid chain: Nicotianamine aminotransferase 1 (494 aa).

Composition is skewed to low complexity over residues 24-38 (SGTS…TSSS) and 48-62 (STAM…AASS). Positions 24-76 (SGTSYPTRTTTTSSSAPEFTNKKQSTAMAPTTAAAAASSNGGGESDGSSKEWR) are disordered. Lysine 322 bears the N6-(pyridoxal phosphate)lysine mark.

Belongs to the class-I pyridoxal-phosphate-dependent aminotransferase family. The cofactor is pyridoxal 5'-phosphate. In terms of tissue distribution, expressed in companion and pericycle cells adjacent to the protoxylem of roots. Expressed in companion cells of shoots.

The enzyme catalyses nicotianamine + 2-oxoglutarate = 3''-deamino-3''-oxonicotianamine + L-glutamate. Involved in biosynthesis of mugineic acid family phytosiderophores, which are ferric iron chelators produced in graminaceous plants in response to iron deficiency. This Oryza sativa subsp. japonica (Rice) protein is Nicotianamine aminotransferase 1.